Consider the following 1058-residue polypeptide: Isoleucine--tRNA ligase (1058 aa).

A 'HIGH' region motif is present at residues 48–58 (PYTTGHIHLGT). The 'KMSKS' region motif lies at 596 to 600 (KMSKS). ATP is bound at residue Lys-599.

The protein belongs to the class-I aminoacyl-tRNA synthetase family. IleS type 2 subfamily. As to quaternary structure, monomer. Zn(2+) serves as cofactor.

The protein localises to the cytoplasm. It catalyses the reaction tRNA(Ile) + L-isoleucine + ATP = L-isoleucyl-tRNA(Ile) + AMP + diphosphate. Functionally, catalyzes the attachment of isoleucine to tRNA(Ile). As IleRS can inadvertently accommodate and process structurally similar amino acids such as valine, to avoid such errors it has two additional distinct tRNA(Ile)-dependent editing activities. One activity is designated as 'pretransfer' editing and involves the hydrolysis of activated Val-AMP. The other activity is designated 'posttransfer' editing and involves deacylation of mischarged Val-tRNA(Ile). The sequence is that of Isoleucine--tRNA ligase from Methanosarcina barkeri (strain Fusaro / DSM 804).